The following is a 274-amino-acid chain: Diaminopimelate epimerase (274 aa).

Substrate-binding residues include N11, Q44, and N64. Residue C73 is the Proton donor of the active site. Substrate-binding positions include 74–75, N157, N190, and 208–209; these read GN and ER. The active-site Proton acceptor is C217. Substrate is bound at residue 218-219; it reads GS.

This sequence belongs to the diaminopimelate epimerase family. As to quaternary structure, homodimer.

Its subcellular location is the cytoplasm. It catalyses the reaction (2S,6S)-2,6-diaminopimelate = meso-2,6-diaminopimelate. The protein operates within amino-acid biosynthesis; L-lysine biosynthesis via DAP pathway; DL-2,6-diaminopimelate from LL-2,6-diaminopimelate: step 1/1. Functionally, catalyzes the stereoinversion of LL-2,6-diaminopimelate (L,L-DAP) to meso-diaminopimelate (meso-DAP), a precursor of L-lysine and an essential component of the bacterial peptidoglycan. This is Diaminopimelate epimerase from Sodalis glossinidius (strain morsitans).